Here is a 704-residue protein sequence, read N- to C-terminus: Polyribonucleotide nucleotidyltransferase (704 aa).

Mg(2+) contacts are provided by aspartate 485 and aspartate 491. The KH domain maps to 552-611; that stretch reads PKTETIQIDPDKIRSVIGAGGKVINKIIQDTGVKIDIKEDGSVFVSSSDHAGVKEAIKII. Residues 621–689 enclose the S1 motif domain; the sequence is GEIYLGKVTK…SQGRINLSRK (69 aa).

The protein belongs to the polyribonucleotide nucleotidyltransferase family. Mg(2+) is required as a cofactor.

The protein localises to the cytoplasm. It catalyses the reaction RNA(n+1) + phosphate = RNA(n) + a ribonucleoside 5'-diphosphate. In terms of biological role, involved in mRNA degradation. Catalyzes the phosphorolysis of single-stranded polyribonucleotides processively in the 3'- to 5'-direction. The sequence is that of Polyribonucleotide nucleotidyltransferase from Clostridium botulinum (strain Eklund 17B / Type B).